The following is a 200-amino-acid chain: ATP-dependent Clp protease proteolytic subunit 3 (200 aa).

The active-site Nucleophile is serine 101. Histidine 126 is an active-site residue.

It belongs to the peptidase S14 family. In terms of assembly, fourteen ClpP subunits assemble into 2 heptameric rings which stack back to back to give a disk-like structure with a central cavity, resembling the structure of eukaryotic proteasomes.

It localises to the cytoplasm. It carries out the reaction Hydrolysis of proteins to small peptides in the presence of ATP and magnesium. alpha-casein is the usual test substrate. In the absence of ATP, only oligopeptides shorter than five residues are hydrolyzed (such as succinyl-Leu-Tyr-|-NHMec, and Leu-Tyr-Leu-|-Tyr-Trp, in which cleavage of the -Tyr-|-Leu- and -Tyr-|-Trp bonds also occurs).. Functionally, cleaves peptides in various proteins in a process that requires ATP hydrolysis. Has a chymotrypsin-like activity. Plays a major role in the degradation of misfolded proteins. The polypeptide is ATP-dependent Clp protease proteolytic subunit 3 (Synechococcus sp. (strain CC9605)).